Here is a 187-residue protein sequence, read N- to C-terminus: MKQQANLIRAGQVIEHDGRRWTVLKQQIITPGKGGAFIQVEMRDLKTGNKTNERWRTADTVERLMTEEKDYTYSYTDGDNLVLMDPETFEQALIPAEILGDAVAFLQDNMQVTVDLVEGDPVAIHLPAQVTLEIVEADPVVKGQTASSSYKPAKLSNGVRVMVPPFIEAGERIVVRTEDSTYVERAK.

It belongs to the elongation factor P family.

Its subcellular location is the cytoplasm. Its pathway is protein biosynthesis; polypeptide chain elongation. In terms of biological role, involved in peptide bond synthesis. Stimulates efficient translation and peptide-bond synthesis on native or reconstituted 70S ribosomes in vitro. Probably functions indirectly by altering the affinity of the ribosome for aminoacyl-tRNA, thus increasing their reactivity as acceptors for peptidyl transferase. The protein is Elongation factor P of Granulibacter bethesdensis (strain ATCC BAA-1260 / CGDNIH1).